The sequence spans 160 residues: Sec-independent protein translocase protein TatB (160 aa).

A helical membrane pass occupies residues 1–21 (MFGMGFFEILVVLVVAIIFLG). The tract at residues 118-160 (HLNEEVSNEEALNKEVSSDESPKEVQLATDNNTKEHDKEKEHV) is disordered. 2 stretches are compositionally biased toward basic and acidic residues: residues 128-140 (ALNK…ESPK) and 149-160 (NTKEHDKEKEHV).

It belongs to the TatB family. The Tat system comprises two distinct complexes: a TatABC complex, containing multiple copies of TatA, TatB and TatC subunits, and a separate TatA complex, containing only TatA subunits. Substrates initially bind to the TatABC complex, which probably triggers association of the separate TatA complex to form the active translocon.

Its subcellular location is the cell inner membrane. In terms of biological role, part of the twin-arginine translocation (Tat) system that transports large folded proteins containing a characteristic twin-arginine motif in their signal peptide across membranes. Together with TatC, TatB is part of a receptor directly interacting with Tat signal peptides. TatB may form an oligomeric binding site that transiently accommodates folded Tat precursor proteins before their translocation. The sequence is that of Sec-independent protein translocase protein TatB from Helicobacter pylori (strain HPAG1).